The sequence spans 203 residues: Chromophore lyase CpcT/CpeT 3 (203 aa).

The protein belongs to the CpcT/CpeT biliprotein lyase family.

Covalently attaches a chromophore to Cys residue(s) of phycobiliproteins. The protein is Chromophore lyase CpcT/CpeT 3 of Gloeobacter violaceus (strain ATCC 29082 / PCC 7421).